Consider the following 445-residue polypeptide: NADH-quinone oxidoreductase subunit F (445 aa).

61–70 provides a ligand contact to NAD(+); that stretch reads GRGGAGFATG. 177–224 serves as a coordination point for FMN; it reads GAGAYICGEETALLDSLEGRRGQPRLRPPFPAVAGLYGCPTVINNVET. C353, C356, C359, and C399 together coordinate [4Fe-4S] cluster.

Belongs to the complex I 51 kDa subunit family. FMN is required as a cofactor. The cofactor is [4Fe-4S] cluster.

The catalysed reaction is a quinone + NADH + 5 H(+)(in) = a quinol + NAD(+) + 4 H(+)(out). Functionally, NDH-1 shuttles electrons from NADH, via FMN and iron-sulfur (Fe-S) centers, to quinones in the respiratory chain. The immediate electron acceptor for the enzyme in this species is believed to be menaquinone. Couples the redox reaction to proton translocation (for every two electrons transferred, four hydrogen ions are translocated across the cytoplasmic membrane), and thus conserves the redox energy in a proton gradient. The polypeptide is NADH-quinone oxidoreductase subunit F (nuoF) (Mycobacterium bovis (strain ATCC BAA-935 / AF2122/97)).